Reading from the N-terminus, the 360-residue chain is MTPPPPKRQKRDEYRKATAEAASQPGPSDVAEIKLPKKKYYRQRAHANPFSDHHLNYPLSPAHMDWSSHYPAFVDPDPSHTNLAGARKLLKDVEVVDIGCGFGGLLIGLAPLLPESLIVGMEIRVSVLEYVTTRIQALRAQQLKLRAATAAATAASETPSQQQAQIDGKQANANAAADAASPVLSTDTEHTPTTLVPGSYENISAIRSNTMKFFPNFFARHQLSKIFICFPDPHFKARKHKARIISETLNAEYAYALRPGGLLYTITDVEEYHHWILRHFGVESGAEEESEEKSTSANANANANAGVRELFERVSEEELEKDECVRVMKEATEEGKKVARNKGNKYVAVFRRKTDPEWPA.

Residues 1 to 32 (MTPPPPKRQKRDEYRKATAEAASQPGPSDVAE) form a disordered region. Residues Gly-99 and 122–123 (EI) each bind S-adenosyl-L-methionine. The interval 177-196 (ADAASPVLSTDTEHTPTTLV) is disordered. Over residues 183 to 196 (VLSTDTEHTPTTLV) the composition is skewed to polar residues. S-adenosyl-L-methionine is bound by residues 209-210 (NT) and Cys-229. The active site involves Asp-232. S-adenosyl-L-methionine is bound at residue 332–334 (TEE).

Belongs to the class I-like SAM-binding methyltransferase superfamily. TrmB family. As to quaternary structure, forms a complex with trm82.

The protein resides in the nucleus. It carries out the reaction guanosine(46) in tRNA + S-adenosyl-L-methionine = N(7)-methylguanosine(46) in tRNA + S-adenosyl-L-homocysteine. It functions in the pathway tRNA modification; N(7)-methylguanine-tRNA biosynthesis. In terms of biological role, catalyzes the formation of N(7)-methylguanine at position 46 (m7G46) in tRNA. This Neosartorya fischeri (strain ATCC 1020 / DSM 3700 / CBS 544.65 / FGSC A1164 / JCM 1740 / NRRL 181 / WB 181) (Aspergillus fischerianus) protein is tRNA (guanine-N(7)-)-methyltransferase (trm8).